The primary structure comprises 784 residues: Protein translocase subunit SecA 2 (784 aa).

ATP-binding positions include glutamine 94, 112-116 (GEGKT), and aspartate 501.

Belongs to the SecA family. In terms of assembly, monomer and homodimer. Part of the essential Sec protein translocation apparatus which comprises SecA, SecYEG and auxiliary proteins SecDF. Other proteins may also be involved.

Its subcellular location is the cell membrane. It localises to the cytoplasm. The catalysed reaction is ATP + H2O + cellular proteinSide 1 = ADP + phosphate + cellular proteinSide 2.. Functionally, part of the Sec protein translocase complex. Interacts with the SecYEG preprotein conducting channel. Has a central role in coupling the hydrolysis of ATP to the transfer of proteins into and across the cell membrane, serving as an ATP-driven molecular motor driving the stepwise translocation of polypeptide chains across the membrane. This is Protein translocase subunit SecA 2 from Mycolicibacterium smegmatis (strain ATCC 700084 / mc(2)155) (Mycobacterium smegmatis).